We begin with the raw amino-acid sequence, 172 residues long: Ribosome maturation factor RimM (172 aa).

In terms of domain architecture, PRC barrel spans 97–170 (ENEFYFHEII…KITIEVMEGL (74 aa)).

The protein belongs to the RimM family. Binds ribosomal protein uS19.

The protein localises to the cytoplasm. Its function is as follows. An accessory protein needed during the final step in the assembly of 30S ribosomal subunit, possibly for assembly of the head region. Essential for efficient processing of 16S rRNA. May be needed both before and after RbfA during the maturation of 16S rRNA. It has affinity for free ribosomal 30S subunits but not for 70S ribosomes. The chain is Ribosome maturation factor RimM from Listeria innocua serovar 6a (strain ATCC BAA-680 / CLIP 11262).